The following is a 212-amino-acid chain: Protein-L-isoaspartate O-methyltransferase (212 aa).

Residue Ser-60 is part of the active site.

Belongs to the methyltransferase superfamily. L-isoaspartyl/D-aspartyl protein methyltransferase family.

It localises to the cytoplasm. The enzyme catalyses [protein]-L-isoaspartate + S-adenosyl-L-methionine = [protein]-L-isoaspartate alpha-methyl ester + S-adenosyl-L-homocysteine. In terms of biological role, catalyzes the methyl esterification of L-isoaspartyl residues in peptides and proteins that result from spontaneous decomposition of normal L-aspartyl and L-asparaginyl residues. It plays a role in the repair and/or degradation of damaged proteins. The chain is Protein-L-isoaspartate O-methyltransferase from Methanococcus maripaludis (strain DSM 14266 / JCM 13030 / NBRC 101832 / S2 / LL).